Consider the following 761-residue polypeptide: Xaa-Pro dipeptidyl-peptidase (761 aa).

Residues serine 347, aspartate 467, and histidine 497 each act as charge relay system in the active site.

The protein belongs to the peptidase S15 family. In terms of assembly, homodimer.

The protein resides in the cytoplasm. The catalysed reaction is Hydrolyzes Xaa-Pro-|- bonds to release unblocked, N-terminal dipeptides from substrates including Ala-Pro-|-p-nitroanilide and (sequentially) Tyr-Pro-|-Phe-Pro-|-Gly-Pro-|-Ile.. Removes N-terminal dipeptides sequentially from polypeptides having unsubstituted N-termini provided that the penultimate residue is proline. This is Xaa-Pro dipeptidyl-peptidase from Streptococcus agalactiae serotype III (strain NEM316).